The chain runs to 66 residues: Large ribosomal subunit protein bL33c (66 aa).

Belongs to the bacterial ribosomal protein bL33 family.

It localises to the plastid. Its subcellular location is the chloroplast. The protein is Large ribosomal subunit protein bL33c of Cucumis sativus (Cucumber).